The sequence spans 61 residues: Large ribosomal subunit protein uL30 (61 aa).

This sequence belongs to the universal ribosomal protein uL30 family. Part of the 50S ribosomal subunit.

The sequence is that of Large ribosomal subunit protein uL30 from Petrotoga mobilis (strain DSM 10674 / SJ95).